Reading from the N-terminus, the 426-residue chain is Enolase (426 aa).

Residue Q163 coordinates (2R)-2-phosphoglycerate. The active-site Proton donor is the E205. Residues D242, E283, and D310 each coordinate Mg(2+). (2R)-2-phosphoglycerate is bound by residues K335, R364, S365, and K386. K335 acts as the Proton acceptor in catalysis.

This sequence belongs to the enolase family. The cofactor is Mg(2+).

It is found in the cytoplasm. The protein localises to the secreted. The protein resides in the cell surface. It carries out the reaction (2R)-2-phosphoglycerate = phosphoenolpyruvate + H2O. It participates in carbohydrate degradation; glycolysis; pyruvate from D-glyceraldehyde 3-phosphate: step 4/5. Functionally, catalyzes the reversible conversion of 2-phosphoglycerate (2-PG) into phosphoenolpyruvate (PEP). It is essential for the degradation of carbohydrates via glycolysis. In Pseudarthrobacter chlorophenolicus (strain ATCC 700700 / DSM 12829 / CIP 107037 / JCM 12360 / KCTC 9906 / NCIMB 13794 / A6) (Arthrobacter chlorophenolicus), this protein is Enolase.